Consider the following 205-residue polypeptide: Protein TON_1965 (205 aa).

The AMMECR1 domain occupies Glu-7–Arg-201.

The polypeptide is Protein TON_1965 (Thermococcus onnurineus (strain NA1)).